Consider the following 333-residue polypeptide: Plasminogen (333 aa).

In terms of domain architecture, Kringle 5 spans 4 to 83 (CMFGNGKGYR…LFDYCDVPQC (80 aa)). Intrachain disulfides connect cysteine 4–cysteine 83, cysteine 25–cysteine 66, cysteine 54–cysteine 78, cysteine 90–cysteine 208, cysteine 100–cysteine 108, cysteine 130–cysteine 146, cysteine 222–cysteine 289, cysteine 252–cysteine 268, and cysteine 279–cysteine 307. Residues 104–331 (VVGGCVANPH…FVTWIEGIMR (228 aa)) enclose the Peptidase S1 domain. Serine 120 carries the post-translational modification Phosphoserine. Catalysis depends on charge relay system residues histidine 145 and aspartate 188. The active-site Charge relay system is the serine 283.

This sequence belongs to the peptidase S1 family. Plasminogen subfamily. In terms of assembly, interacts with CSPG4 and AMOT. Interacts (via the Kringle domains) with HRG; the interaction tethers PLG to the cell surface and enhances its activation. Interacts (via Kringle 4 domain) with ADA; the interaction stimulates PLG activation when in complex with DPP4. Angiostatin: Interacts with ATP5F1A; the interaction inhibits most of the angiogenic effects of angiostatin.

The protein localises to the secreted. It carries out the reaction Preferential cleavage: Lys-|-Xaa &gt; Arg-|-Xaa, higher selectivity than trypsin. Converts fibrin into soluble products.. Its activity is regulated as follows. Converted into plasmin by plasminogen activators, both plasminogen and its activator being bound to fibrin. Activated with urokinase and high concentrations of streptokinase. In terms of biological role, plasmin dissolves the fibrin of blood clots and acts as a proteolytic factor in a variety of other processes including embryonic development, tissue remodeling, tumor invasion, and inflammation. In ovulation, weakens the walls of the Graafian follicle. It activates the urokinase-type plasminogen activator, collagenases and several complement zymogens, such as C1, C4 and C5. Cleavage of fibronectin and laminin leads to cell detachment and apoptosis. Also cleaves fibrin, thrombospondin and von Willebrand factor. Its role in tissue remodeling and tumor invasion may be modulated by CSPG4. Binds to cells. The sequence is that of Plasminogen (PLG) from Canis lupus familiaris (Dog).